We begin with the raw amino-acid sequence, 72 residues long: DNA-directed RNA polymerase subunit omega (72 aa).

This sequence belongs to the RNA polymerase subunit omega family. In terms of assembly, the RNAP catalytic core consists of 2 alpha, 1 beta, 1 beta' and 1 omega subunit. When a sigma factor is associated with the core the holoenzyme is formed, which can initiate transcription.

It carries out the reaction RNA(n) + a ribonucleoside 5'-triphosphate = RNA(n+1) + diphosphate. Functionally, promotes RNA polymerase assembly. Latches the N- and C-terminal regions of the beta' subunit thereby facilitating its interaction with the beta and alpha subunits. This is DNA-directed RNA polymerase subunit omega from Campylobacter lari (strain RM2100 / D67 / ATCC BAA-1060).